The primary structure comprises 132 residues: 3-aminoacrylate deaminase RutC (132 aa).

It belongs to the RutC family.

The catalysed reaction is (Z)-3-aminoacrylate + H2O + H(+) = 3-oxopropanoate + NH4(+). Involved in pyrimidine catabolism. Catalyzes the deamination of 3-aminoacrylate to malonic semialdehyde, a reaction that can also occur spontaneously. RutC may facilitate the reaction and modulate the metabolic fitness, rather than catalyzing essential functions. In Cronobacter sakazakii (strain ATCC BAA-894) (Enterobacter sakazakii), this protein is 3-aminoacrylate deaminase RutC.